The following is a 680-amino-acid chain: Anosmin-1 (680 aa).

The signal sequence occupies residues 1-24 (MVPGVPGAVLTLCLWLAASSGCLA). 5 disulfides stabilise this stretch: Cys-49–Cys-83, Cys-53–Cys-77, Cys-86–Cys-105, Cys-90–Cys-101, and Cys-116–Cys-120. Asn-71 is a glycosylation site (N-linked (GlcNAc...) asparagine). In terms of domain architecture, WAP spans 127-176 (LLVKQGDCPAPEKASGFAAACVESCEVDNECSGVKKCCSNGCGHTCQVPK). Fibronectin type-III domains follow at residues 186–287 (PRKE…SKDP), 292–400 (APAN…THAT), 425–523 (PTRP…TPPC), and 550–658 (KPEN…LPPS). N-linked (GlcNAc...) asparagine glycosylation is found at Asn-209, Asn-300, Asn-470, Asn-553, and Asn-564. Residues 642-680 (EGPATIKTFRTPELPPSSAHRSHLKHRHPHHYKPSPERY) are disordered. Basic residues predominate over residues 661–674 (HRSHLKHRHPHHYK).

As to quaternary structure, interacts with FGFR1; this interaction does not interfere with FGF2-binding to FGFR1. Binds heparin. Heparin may promote or interfere with ANOS1-FGFR1-FGF2 complex formation depending on the sequential order of its binding to the various constituents. For instance, heparin-ANOS1 interaction favors subsequent binding to pre-existing binary FGFR1-FGF2 complex, while heparin-FGF2 complex does not interact with ANOS1-FGFR1. Post-translationally, N-glycosylated. May be proteolytically cleaved at the cell surface and released from the cell surface. Expressed in the cerebellum (at protein level).

The protein resides in the cell membrane. It localises to the secreted. Functionally, has a dual branch-promoting and guidance activity, which may play an important role in the patterning of mitral and tufted cell collaterals to the olfactory cortex. Chemoattractant for fetal olfactory epithelial cells. The chain is Anosmin-1 from Homo sapiens (Human).